Consider the following 616-residue polypeptide: Dihydroxy-acid dehydratase (616 aa).

A Mg(2+)-binding site is contributed by aspartate 81. Position 122 (cysteine 122) interacts with [2Fe-2S] cluster. Residues aspartate 123 and lysine 124 each coordinate Mg(2+). At lysine 124 the chain carries N6-carboxylysine. Residue cysteine 197 coordinates [2Fe-2S] cluster. Glutamate 493 is a Mg(2+) binding site. Serine 519 functions as the Proton acceptor in the catalytic mechanism.

This sequence belongs to the IlvD/Edd family. Homodimer. The cofactor is [2Fe-2S] cluster. It depends on Mg(2+) as a cofactor.

The catalysed reaction is (2R)-2,3-dihydroxy-3-methylbutanoate = 3-methyl-2-oxobutanoate + H2O. It carries out the reaction (2R,3R)-2,3-dihydroxy-3-methylpentanoate = (S)-3-methyl-2-oxopentanoate + H2O. Its pathway is amino-acid biosynthesis; L-isoleucine biosynthesis; L-isoleucine from 2-oxobutanoate: step 3/4. It functions in the pathway amino-acid biosynthesis; L-valine biosynthesis; L-valine from pyruvate: step 3/4. In terms of biological role, functions in the biosynthesis of branched-chain amino acids. Catalyzes the dehydration of (2R,3R)-2,3-dihydroxy-3-methylpentanoate (2,3-dihydroxy-3-methylvalerate) into 2-oxo-3-methylpentanoate (2-oxo-3-methylvalerate) and of (2R)-2,3-dihydroxy-3-methylbutanoate (2,3-dihydroxyisovalerate) into 2-oxo-3-methylbutanoate (2-oxoisovalerate), the penultimate precursor to L-isoleucine and L-valine, respectively. The sequence is that of Dihydroxy-acid dehydratase from Corynebacterium kroppenstedtii (strain DSM 44385 / JCM 11950 / CIP 105744 / CCUG 35717).